A 399-amino-acid chain; its full sequence is Probable sugar efflux transporter (399 aa).

The next 12 membrane-spanning stretches (helical) occupy residues 15–35, 50–70, 81–101, 103–123, 136–156, 168–188, 209–229, 246–266, 273–293, 301–321, 333–353, and 364–384; these read VVTL…PVGL, VGMM…PFML, LIGL…AWNF, VLVI…SITS, AQAL…GIPI, MTFL…VKLL, PALV…YTAY, FATV…ILFG, ASGL…LLLP, LMLL…GMQV, VAMS…ALVG, and SVGY…LMIF.

It belongs to the major facilitator superfamily. SotB (TC 2.A.1.2) family.

The protein resides in the cell inner membrane. Functionally, involved in the efflux of sugars. The physiological role may be the reduction of the intracellular concentration of toxic sugars or sugar metabolites. The protein is Probable sugar efflux transporter of Klebsiella pneumoniae subsp. pneumoniae (strain ATCC 700721 / MGH 78578).